The chain runs to 116 residues: Large ribosomal subunit protein bL19 (116 aa).

It belongs to the bacterial ribosomal protein bL19 family.

Functionally, this protein is located at the 30S-50S ribosomal subunit interface and may play a role in the structure and function of the aminoacyl-tRNA binding site. The polypeptide is Large ribosomal subunit protein bL19 (Ectopseudomonas mendocina (strain ymp) (Pseudomonas mendocina)).